The sequence spans 428 residues: MNQSETLFAQAKTVIPGGVNSPVRAFNGVGGSPIFFTRGEGAYLFDEDDKKYIDYVASWGSMILGHTNQAVIIAVKTTLENGLGFGAPTQIETKLAEKVCELMPSIELVRMVSSGTEATMSAIRLARGHTGRDKIIKFEGCYHGHSDSLLIKAGSGALTLGVPTSPGVPKDFAKHTLTLEYNNIDQVCEVLSEVGAEVACIIVEPVAGNMNCIPPIDGFLQVLRELCDEYGVILVFDEVMTGFRVALGGAQAFYNVKPDLTTLGKVIGGGLPVGAFGGKREIMQSIAPLGPVYQAGTLSGNPISMSAGLVMLNVLSKDENFYTILNTKVQKLTKGILAKAKENNIGMTANVVGGMFGLFFTDSQSVTNFKETSQCNIELFKKFFHLMLAEGVYMAPSAYEAGFVSSAHSDTDIQNTIDAAGRAFIKLT.

N6-(pyridoxal phosphate)lysine is present on Lys-265.

Belongs to the class-III pyridoxal-phosphate-dependent aminotransferase family. HemL subfamily. Homodimer. Pyridoxal 5'-phosphate serves as cofactor.

It localises to the cytoplasm. It carries out the reaction (S)-4-amino-5-oxopentanoate = 5-aminolevulinate. The protein operates within porphyrin-containing compound metabolism; protoporphyrin-IX biosynthesis; 5-aminolevulinate from L-glutamyl-tRNA(Glu): step 2/2. In Ruthia magnifica subsp. Calyptogena magnifica, this protein is Glutamate-1-semialdehyde 2,1-aminomutase.